Consider the following 580-residue polypeptide: 9,13-epoxylabda-14-ene synthase, chloroplastic (580 aa).

The transit peptide at 1–32 (MSITFNLKIAPFSGPGIQRSKETFPATEIQIT) directs the protein to the chloroplast. Asp322, Asp326, Asn466, Thr470, and Glu474 together coordinate Mg(2+). Residues 322–326 (DDFFD) carry the DDXXD motif motif.

Belongs to the terpene synthase family. Mg(2+) serves as cofactor. Present in both leaves and flowers, with higher levels in leaves.

Its subcellular location is the plastid. It localises to the chloroplast. It carries out the reaction peregrinol diphosphate = (13R)-9,13-epoxylabd-14-ene + diphosphate. The enzyme catalyses (+)-copalyl diphosphate = miltiradiene + diphosphate. It catalyses the reaction 8-hydroxycopalyl diphosphate = (13R)-manoyl oxide + diphosphate. It functions in the pathway secondary metabolite biosynthesis; terpenoid biosynthesis. Functionally, involved in the biosynthesis of labdane-type diterpenoid including marrubiin and other labdane-related furanoid diterpenoids with potential applications as anti-diabetics, analgesics or vasorelaxants. Terpene synthase the catalyzes the conversion of peregrinol diphosphate to 9,13(R)-epoxy-labd-14-ene, from (+)-copalyl diphosphate ((+)-CPP) to miltiradiene and from 8-hydroxycopalyl diphosphate (LPP, labda-13-en-8-ol diphosphate) to manoyl oxide. The protein is 9,13-epoxylabda-14-ene synthase, chloroplastic of Marrubium vulgare (White horehound).